The sequence spans 229 residues: MAKKSKQLRAALEKIDSTKAYSVEEAVALAKETNFAKFDATVEVAYNLNIDVKKADQQIRGAMVLPNGTGKTSRVLVFARGAKAEEAKAAGADFVGEDDLVAKINDGWLDFDVVIATPDMMALVGRLGRVLGPRNLMPNPKTGTVTMDVAKAVEESKGGKITYRADRAGNVQAIIGKVSFEAEKLVENFKAFNETIQKVKPATAKGTYVTNLTITTTQGVGIKVDVNSL.

This sequence belongs to the universal ribosomal protein uL1 family. Part of the 50S ribosomal subunit.

Binds directly to 23S rRNA. The L1 stalk is quite mobile in the ribosome, and is involved in E site tRNA release. Functionally, protein L1 is also a translational repressor protein, it controls the translation of the L11 operon by binding to its mRNA. This Streptococcus pneumoniae (strain ATCC 700669 / Spain 23F-1) protein is Large ribosomal subunit protein uL1.